The chain runs to 424 residues: 3-oxo-tetronate kinase (424 aa).

Residues Ser-264, 363 to 366, and Gly-408 contribute to the ATP site; that span reads GGET.

The protein belongs to the four-carbon acid sugar kinase family.

The catalysed reaction is 3-dehydro-L-erythronate + ATP = 3-dehydro-4-O-phospho-L-erythronate + ADP + H(+). It carries out the reaction 3-dehydro-D-erythronate + ATP = 3-dehydro-4-O-phospho-D-erythronate + ADP + H(+). Catalyzes the ATP-dependent phosphorylation of 3-oxo-tetronate to 3-oxo-tetronate 4-phosphate. This is 3-oxo-tetronate kinase from Methylobacterium radiotolerans (strain ATCC 27329 / DSM 1819 / JCM 2831 / NBRC 15690 / NCIMB 10815 / 0-1).